The chain runs to 281 residues: ATP phosphoribosyltransferase (281 aa).

The protein belongs to the ATP phosphoribosyltransferase family. Long subfamily. In terms of assembly, equilibrium between an active dimeric form, an inactive hexameric form and higher aggregates. Interconversion between the various forms is largely reversible and is influenced by the natural substrates and inhibitors of the enzyme. It depends on Mg(2+) as a cofactor.

The protein resides in the cytoplasm. The enzyme catalyses 1-(5-phospho-beta-D-ribosyl)-ATP + diphosphate = 5-phospho-alpha-D-ribose 1-diphosphate + ATP. It participates in amino-acid biosynthesis; L-histidine biosynthesis; L-histidine from 5-phospho-alpha-D-ribose 1-diphosphate: step 1/9. Feedback inhibited by histidine. In terms of biological role, catalyzes the condensation of ATP and 5-phosphoribose 1-diphosphate to form N'-(5'-phosphoribosyl)-ATP (PR-ATP). Has a crucial role in the pathway because the rate of histidine biosynthesis seems to be controlled primarily by regulation of HisG enzymatic activity. The protein is ATP phosphoribosyltransferase of Mycolicibacterium gilvum (strain PYR-GCK) (Mycobacterium gilvum (strain PYR-GCK)).